The sequence spans 496 residues: MPLITTETGKKMHVLEDGRKLITVIPGDGIGPECVEATLKVLEAAKAPLAYEVREAGASVFRRGIASGVPQETIESIRKTRVVLKGPLETPVGYGEKSANVTLRKLFETYANVRPVREFPNVPTPYAGRGIDLVVVRENVEDLYAGIEHMQTPSVAQTLKLISWKGSEKIVRFAFELARAEGRKKVHCATKSNIMKLAEGTLKRAFEQVAQEYPDIEAVHIIVDNAAHQLVKRPEQFEVIVTTNMNGDILSDLTSGLIGGLGFAPSANIGNEVAIFEAVHGSAPKYAGKNVINPTAVLLSAVMMLRYLEEFATADLIENALLYTLEEGRVLTGDVVGYDRGAKTTEYTEAIIQNLGKTPRKTQVRGYKPFRLPQVDGAIAPIVPRSRRVVGVDVFVETNLLPEALGKALEDLAAGTPFRLKMISNRGTQVYPPTGGLTDLVDHYRCRFLYTGEGEAKDPEILDLVSRVASRFRWMHLEKLQEFDGEPGFTKAQGED.

The NADP(+) site is built by Leu88 and Thr90. D-threo-isocitrate is bound by residues Ser98, Asn100, Arg104, Arg114, and Arg137. NADP(+)-binding residues include Asn193, Gln229, and Lys232. Asp248 provides a ligand contact to Mg(2+). The NADP(+) site is built by Glu277, Gly281, Ser282, Ala283, Lys285, Tyr286, and Asn293.

This sequence belongs to the isocitrate and isopropylmalate dehydrogenases family. Homodimer. Mg(2+) serves as cofactor. It depends on Mn(2+) as a cofactor.

The catalysed reaction is D-threo-isocitrate + NADP(+) = 2-oxoglutarate + CO2 + NADPH. Functionally, catalyzes the oxidative decarboxylation of isocitrate to 2-oxoglutarate and carbon dioxide with the concomitant reduction of NADP(+). The polypeptide is Isocitrate dehydrogenase [NADP] (icd) (Thermus thermophilus (strain ATCC 27634 / DSM 579 / HB8)).